Reading from the N-terminus, the 301-residue chain is UDP-3-O-acyl-N-acetylglucosamine deacetylase (301 aa).

Zn(2+) is bound by residues His-81, His-237, and Asp-241. The Proton donor role is filled by His-264.

It belongs to the LpxC family. It depends on Zn(2+) as a cofactor.

It catalyses the reaction a UDP-3-O-[(3R)-3-hydroxyacyl]-N-acetyl-alpha-D-glucosamine + H2O = a UDP-3-O-[(3R)-3-hydroxyacyl]-alpha-D-glucosamine + acetate. The protein operates within glycolipid biosynthesis; lipid IV(A) biosynthesis; lipid IV(A) from (3R)-3-hydroxytetradecanoyl-[acyl-carrier-protein] and UDP-N-acetyl-alpha-D-glucosamine: step 2/6. In terms of biological role, catalyzes the hydrolysis of UDP-3-O-myristoyl-N-acetylglucosamine to form UDP-3-O-myristoylglucosamine and acetate, the committed step in lipid A biosynthesis. The chain is UDP-3-O-acyl-N-acetylglucosamine deacetylase from Leptospira borgpetersenii serovar Hardjo-bovis (strain JB197).